The following is a 330-amino-acid chain: Flotillin-like protein FloA (330 aa).

A run of 2 helical transmembrane segments spans residues 5–25 (FLPL…FYYV) and 27–47 (FLLW…QLFL).

It belongs to the flotillin-like FloA family. In terms of assembly, homooligomerizes.

It localises to the cell membrane. The protein resides in the membrane raft. In terms of biological role, found in functional membrane microdomains (FMM) that may be equivalent to eukaryotic membrane rafts. FMMs are highly dynamic and increase in number as cells age. Flotillins are thought to be important factors in membrane fluidity. This chain is Flotillin-like protein FloA, found in Parabacteroides distasonis (strain ATCC 8503 / DSM 20701 / CIP 104284 / JCM 5825 / NCTC 11152).